The following is a 78-amino-acid chain: Acyl carrier protein (78 aa).

The Carrier domain maps to 2–77; that stretch reads STIEERVKKI…AAIDYVKAHQ (76 aa). O-(pantetheine 4'-phosphoryl)serine is present on Ser-37.

Belongs to the acyl carrier protein (ACP) family. In terms of processing, 4'-phosphopantetheine is transferred from CoA to a specific serine of apo-ACP by AcpS. This modification is essential for activity because fatty acids are bound in thioester linkage to the sulfhydryl of the prosthetic group.

The protein resides in the cytoplasm. It participates in lipid metabolism; fatty acid biosynthesis. In terms of biological role, carrier of the growing fatty acid chain in fatty acid biosynthesis. The polypeptide is Acyl carrier protein (Pseudomonas putida (strain ATCC 47054 / DSM 6125 / CFBP 8728 / NCIMB 11950 / KT2440)).